Here is a 56-residue protein sequence, read N- to C-terminus: Ferredoxin (56 aa).

4Fe-4S ferredoxin-type domains lie at 2–28 (AYKILDTCVSCGACAAECPVDAISQGD) and 29–56 (TQFVIDADTCIDCGNCANVCPVGAPVQE). Residues C9, C12, C15, C19, C38, C41, C44, and C48 each coordinate [4Fe-4S] cluster.

Requires [4Fe-4S] cluster as cofactor.

Functionally, ferredoxins are iron-sulfur proteins that transfer electrons in a wide variety of metabolic reactions. The chain is Ferredoxin (fer) from Clostridium perfringens (strain 13 / Type A).